A 404-amino-acid chain; its full sequence is Glucose-1-phosphate adenylyltransferase (404 aa).

Alpha-D-glucose 1-phosphate is bound by residues Tyr-99, Gly-164, 179 to 180 (EK), and Ser-197.

This sequence belongs to the bacterial/plant glucose-1-phosphate adenylyltransferase family.

It catalyses the reaction alpha-D-glucose 1-phosphate + ATP + H(+) = ADP-alpha-D-glucose + diphosphate. The protein operates within capsule biogenesis; capsule polysaccharide biosynthesis. It functions in the pathway glycan biosynthesis; glycogen biosynthesis. Involved in the biosynthesis of ADP-glucose, a building block, required in the biosynthesis of maltose-1-phosphate (M1P) and in the elongation reactions to produce linear alpha-1,4-glucans. Catalyzes the reaction between ATP and alpha-D-glucose 1-phosphate (G1P) to produce pyrophosphate and ADP-Glc. The polypeptide is Glucose-1-phosphate adenylyltransferase (Mycolicibacterium paratuberculosis (strain ATCC BAA-968 / K-10) (Mycobacterium paratuberculosis)).